The sequence spans 1236 residues: DNA topoisomerase 2 (1236 aa).

Residues asparagine 65, asparagine 96, 124-126 (SSN), 137-144 (GRHGYGAK), and 354-356 (QSK) each bind ATP. A Toprim domain is found at 434 to 548 (RTLIITEGDS…KLLQNNPGYI (115 aa)). Residues glutamate 440, aspartate 517, and aspartate 519 each contribute to the Mg(2+) site. In terms of domain architecture, Topo IIA-type catalytic spans 685–1101 (IPHCVDGLKP…TPVKMWLTEL (417 aa)). Tyrosine 775 serves as the catalytic O-(5'-phospho-DNA)-tyrosine intermediate. The interval 956 to 965 (ALAQRIYING) is interaction with DNA. A disordered region spans residues 1161-1211 (YEKPPPSKRRPGESVGGARPSDSAARTVGKRLVGSRSEFKNKKPMSRKNNV).

Belongs to the type II topoisomerase family. In terms of assembly, homodimer. The cofactor is Mg(2+). Mn(2+) serves as cofactor. Requires Ca(2+) as cofactor.

Its subcellular location is the nucleus. It carries out the reaction ATP-dependent breakage, passage and rejoining of double-stranded DNA.. In terms of biological role, control of topological states of DNA by transient breakage and subsequent rejoining of DNA strands. Topoisomerase II makes double-strand breaks. The polypeptide is DNA topoisomerase 2 (TOP2) (Leishmania chagasi).